The chain runs to 1576 residues: Protein Shroom (1576 aa).

Disordered stretches follow at residues 1–31, 46–100, 112–142, 187–244, 267–434, 589–609, and 621–660; these read MKMR…ENNN, SNGA…TQAG, YDQT…DSTS, RQSH…SSTE, ISES…ISVT, VERQ…HSQS, and PNNL…SLLP. The span at 10 to 21 shows a compositional bias: polar residues; it reads GNGSEMGESTKS. 3 stretches are compositionally biased toward low complexity: residues 46–69, 76–91, and 128–142; these read SNGA…AGSV, HNSS…GSSL, and SEGY…DSTS. The span at 189 to 211 shows a compositional bias: basic residues; that stretch reads SHSHSHSHAHSHSNSHGHSHGHA. Composition is skewed to low complexity over residues 212–244 and 267–283; these read HSAS…SSTE and ISES…SSRV. Over residues 305 to 317 the composition is skewed to polar residues; sequence DSSPTASNSSQMM. Residues 376 to 388 show a composition bias toward low complexity; that stretch reads QSTLSTQSSLLEL. Residues 399–415 show a composition bias toward polar residues; sequence MGQSHSMGDLQQKNPHQ. A Phosphoserine modification is found at S404. The tract at residues 445 to 920 is F-actin binding region required for planar polarity and cortical localization; sequence APQPPAGKPS…LESNQQKRSN (476 aa). Positions 633–643 are enriched in polar residues; sequence TGSNSASTRDC. Phosphoserine occurs at positions 667 and 668. 7 disordered regions span residues 699–728, 743–823, 849–876, 910–939, 1036–1055, 1091–1116, and 1210–1244; these read ISFN…SSAT, AALA…NCFA, VPKK…HHAT, NLES…NTDP, GYGK…SQSY, PTAT…SHSD, and SFAN…DVHD. The segment covering 748–759 has biased composition (basic residues); it reads QQHHPQQHRHAQ. The span at 798 to 816 shows a compositional bias: pro residues; the sequence is PLPPPPPPEVLQPRPPPSP. Polar residues-rich tracts occupy residues 910–923 and 1042–1055; these read NLES…NSKA and KPVT…SQSY. Composition is skewed to pro residues over residues 1094–1108 and 1217–1229; these read TPTP…PPRL and MTPP…PPPL. Positions 1230 to 1239 are enriched in acidic residues; sequence EPEEEEEQEE. The stretch at 1232-1296 forms a coiled coil; sequence EEEEEQEEND…LEAAREEHQT (65 aa). Residues 1305-1572 enclose the ASD2 domain; it reads RQPIELDYEQ…QLSSLSDALV (268 aa).

The protein belongs to the shroom family. Monomer or homodimer. Interacts with Rok. In terms of assembly, binds (via N-terminus) to F-actin.

The protein localises to the cell junction. The protein resides in the adherens junction. Its subcellular location is the cytoplasm. It localises to the cytoskeleton. It is found in the apical cell membrane. Binds to Rho-kinase Rok and targets it to the apical cell cortex where it mediates apical constriction. During embryogenic axis elongation, required for the localization to adherens junctions and the establishment of planar polarization of both Rho-kinase Rok and myosin regulatory light chain sqh. May be involved in the assembly of microtubule arrays during cell elongation. This chain is Protein Shroom, found in Drosophila melanogaster (Fruit fly).